Consider the following 246-residue polypeptide: MNKLEKEASVFFKKNQESVSQDFKKKVSSIEMFSTSLNSEENQSLDRLFLSETQNLSDEESYQEDVLSVKLLTSQIKAIQKQHVLLLGEKIYNARKILSKSCFSSTTFSSWLDLVFRTKSSAYNALAYYELFISLPSTTLQKEFQSIPYKSAYILAARKGDLKTKVSVIGKVCGMSNASAIRVMDQLLPSSRSKDNQRFFESDLEKNRQLSDLLVELLRIVCSGVFLSPYNENLLQQLFEVYKQKS.

It belongs to the UPF0137 (pGP6-D) family.

The protein is Virulence plasmid protein pGP6-D of Chlamydia muridarum (strain MoPn / Nigg).